A 214-amino-acid polypeptide reads, in one-letter code: Peptide methionine sulfoxide reductase B1, chloroplastic (214 aa).

Residues Met1–Arg53 constitute a chloroplast transit peptide. Low complexity predominate over residues Ala58–Gly81. A disordered region spans residues Ala58–Asp91. A MsrB domain is found at Asp91–Thr213. Positions 130, 133, 179, and 182 each coordinate Zn(2+). Cys202 acts as the Nucleophile in catalysis.

This sequence belongs to the MsrB Met sulfoxide reductase family. The cofactor is Zn(2+). Expressed in leaves and flowers.

It localises to the plastid. Its subcellular location is the chloroplast. It carries out the reaction L-methionyl-[protein] + [thioredoxin]-disulfide + H2O = L-methionyl-(R)-S-oxide-[protein] + [thioredoxin]-dithiol. Catalyzes the reduction of methionine sulfoxide (MetSO) to methionine in proteins. Involved in abiotic stress response. Plays a protective role against oxidative stress by restoring activity to proteins that have been inactivated by methionine oxidation. MSRB family specifically reduces the MetSO R-enantiomer. This chain is Peptide methionine sulfoxide reductase B1, chloroplastic, found in Oryza sativa subsp. japonica (Rice).